The sequence spans 264 residues: tRNA1(Val) (adenine(37)-N6)-methyltransferase (264 aa).

It belongs to the methyltransferase superfamily. tRNA (adenine-N(6)-)-methyltransferase family.

The protein localises to the cytoplasm. The catalysed reaction is adenosine(37) in tRNA1(Val) + S-adenosyl-L-methionine = N(6)-methyladenosine(37) in tRNA1(Val) + S-adenosyl-L-homocysteine + H(+). Specifically methylates the adenine in position 37 of tRNA(1)(Val) (anticodon cmo5UAC). The chain is tRNA1(Val) (adenine(37)-N6)-methyltransferase from Shewanella pealeana (strain ATCC 700345 / ANG-SQ1).